The chain runs to 107 residues: U1-lycotoxin-Ls1v (107 aa).

The signal sequence occupies residues 1-20; the sequence is MMKVLVVVALLVTLISYSSS. Positions 21–41 are excised as a propeptide; the sequence is EGIDDLEADELLSLTANEQTR. 4 cysteine pairs are disulfide-bonded: Cys-44–Cys-59, Cys-51–Cys-68, Cys-58–Cys-86, and Cys-70–Cys-84.

This sequence belongs to the neurotoxin 19 (CSTX) family. 04 (U1-Lctx) subfamily. In terms of tissue distribution, expressed by the venom gland.

It localises to the secreted. This is U1-lycotoxin-Ls1v from Lycosa singoriensis (Wolf spider).